We begin with the raw amino-acid sequence, 428 residues long: Adenylosuccinate synthetase (428 aa).

Residues G12 to K18 and G40 to T42 each bind GTP. D13 functions as the Proton acceptor in the catalytic mechanism. Mg(2+)-binding residues include D13 and G40. Residues D13–K16, N38–H41, T128, R142, Q223, T238, and R302 each bind IMP. H41 serves as the catalytic Proton donor. V298–R304 is a binding site for substrate. GTP contacts are provided by residues R304, K330–D332, and G412–G414.

Belongs to the adenylosuccinate synthetase family. As to quaternary structure, homodimer. It depends on Mg(2+) as a cofactor.

It localises to the cytoplasm. The catalysed reaction is IMP + L-aspartate + GTP = N(6)-(1,2-dicarboxyethyl)-AMP + GDP + phosphate + 2 H(+). It functions in the pathway purine metabolism; AMP biosynthesis via de novo pathway; AMP from IMP: step 1/2. Functionally, plays an important role in the de novo pathway of purine nucleotide biosynthesis. Catalyzes the first committed step in the biosynthesis of AMP from IMP. In Cutibacterium acnes (strain DSM 16379 / KPA171202) (Propionibacterium acnes), this protein is Adenylosuccinate synthetase.